The primary structure comprises 478 residues: Leukotoxin secretion protein D (478 aa).

Residues 1–59 (MKIWLSGIYEFFLRYKNTWAEVWKIRKELDHPNRKKDESEFLPAHLDLIETPVSKKPRL) lie on the Cytoplasmic side of the membrane. Residues 60–80 (IAYLIMLFLVVAIVLASVSKV) form a helical membrane-spanning segment. Topologically, residues 81 to 478 (EIVATAPGKL…ESVTESLRER (398 aa)) are periplasmic.

It belongs to the membrane fusion protein (MFP) (TC 8.A.1) family.

Its subcellular location is the cell inner membrane. In terms of biological role, involved in the transport of the Leukotoxin. The chain is Leukotoxin secretion protein D (lktD) from Mannheimia haemolytica (Pasteurella haemolytica).